The sequence spans 489 residues: Diaminopimelate decarboxylase 2, chloroplastic (489 aa).

The N-terminal 50 residues, 1 to 50 (MAAVTQFLSQPSSIRGTLNQYQLNQTSLSRIPFLSLKSTLKPLKRLSVKA), are a transit peptide targeting the chloroplast. Alanine 51 is subject to N-acetylalanine. Lysine 130 bears the N6-(pyridoxal phosphate)lysine mark. Pyridoxal 5'-phosphate-binding positions include glycine 309 and 345-348 (EPGR). Residues arginine 348, arginine 384, and tyrosine 388 each contribute to the substrate site. Cysteine 416 functions as the Proton donor in the catalytic mechanism. Glutamate 417 and tyrosine 445 together coordinate substrate. Position 445 (tyrosine 445) interacts with pyridoxal 5'-phosphate.

It belongs to the Orn/Lys/Arg decarboxylase class-II family. LysA subfamily. Homodimer. It depends on pyridoxal 5'-phosphate as a cofactor.

The protein localises to the plastid. Its subcellular location is the chloroplast. It catalyses the reaction meso-2,6-diaminopimelate + H(+) = L-lysine + CO2. It participates in amino-acid biosynthesis; L-lysine biosynthesis via DAP pathway; L-lysine from DL-2,6-diaminopimelate: step 1/1. Specifically catalyzes the decarboxylation of meso-diaminopimelate (meso-DAP) to L-lysine. The sequence is that of Diaminopimelate decarboxylase 2, chloroplastic (LYSA2) from Arabidopsis thaliana (Mouse-ear cress).